A 423-amino-acid chain; its full sequence is Probable electron transfer flavoprotein-quinone oxidoreductase YgcN (423 aa).

7–21 (IIIIGAGIAGTACAL) contributes to the FAD binding site.

Belongs to the ETF-QO/FixC family. FAD serves as cofactor.

Its function is as follows. Probably accepts electrons from YgcQ/YgcR and reduces a quinone. The polypeptide is Probable electron transfer flavoprotein-quinone oxidoreductase YgcN (ygcN) (Escherichia coli (strain K12)).